The chain runs to 233 residues: Mediator of RNA polymerase II transcription subunit 8 (233 aa).

The segment at 204–233 (RGEVDRGSSSQEGLSTNNEQSGDKDIIMAD) is disordered. Positions 210 to 223 (GSSSQEGLSTNNEQ) are enriched in polar residues. Positions 224–233 (SGDKDIIMAD) are enriched in basic and acidic residues.

This sequence belongs to the Mediator complex subunit 8 family. As to quaternary structure, component of the Mediator complex.

The protein resides in the nucleus. Functionally, component of the Mediator complex, a coactivator involved in the regulated transcription of nearly all RNA polymerase II-dependent genes. Mediator functions as a bridge to convey information from gene-specific regulatory proteins to the basal RNA polymerase II transcription machinery. Mediator is recruited to promoters by direct interactions with regulatory proteins and serves as a scaffold for the assembly of a functional preinitiation complex with RNA polymerase II and the general transcription factors. This Candida glabrata (strain ATCC 2001 / BCRC 20586 / JCM 3761 / NBRC 0622 / NRRL Y-65 / CBS 138) (Yeast) protein is Mediator of RNA polymerase II transcription subunit 8 (MED8).